The following is a 368-amino-acid chain: MNSGPLEFTVSANTNPATDAVRESILANPGFGKYYTDHMVSIDYTVDEGWHNAQVIPYGPIQLDPSAIVLHYGQEIFEGLKAYRWADGSIVSFRPEANAARLQSSARRLAIPELPEEVFIESLRQLIAVDEKWVPPAGGEESLYLRPFVIATEPGLGVRPSNEYRYLLIASPAGAYFKGGIKPVSVWLSHEYVRASPGGTGAAKFGGNYAASLLAQAQAAEMGCDQVVWLDAIERRYVEEMGGMNLFFVFGSGGSARLVTPELSGSLLPGITRDSLLQLATDAGFAVEERKIDVDEWQKKAGAGEITEVFACGTAAVITPVSHVKHHDGEFTIADGQPGEITMALRDTLTGIQRGTFADTHGWMARLN.

Arg-101 provides a ligand contact to pyridoxal 5'-phosphate. The residue at position 204 (Lys-204) is an N6-(pyridoxal phosphate)lysine. Residues Tyr-209 and 271–272 contribute to the pyridoxal 5'-phosphate site; that span reads IT. Lys-299 is covalently cross-linked (Isoglutamyl lysine isopeptide (Lys-Gln) (interchain with Q-Cter in protein Pup)). Residue Thr-314 coordinates pyridoxal 5'-phosphate.

Belongs to the class-IV pyridoxal-phosphate-dependent aminotransferase family. As to quaternary structure, homodimer. It depends on pyridoxal 5'-phosphate as a cofactor.

The catalysed reaction is L-isoleucine + 2-oxoglutarate = (S)-3-methyl-2-oxopentanoate + L-glutamate. It catalyses the reaction L-valine + 2-oxoglutarate = 3-methyl-2-oxobutanoate + L-glutamate. The enzyme catalyses L-leucine + 2-oxoglutarate = 4-methyl-2-oxopentanoate + L-glutamate. It functions in the pathway amino-acid biosynthesis; L-isoleucine biosynthesis; L-isoleucine from 2-oxobutanoate: step 4/4. It participates in amino-acid biosynthesis; L-leucine biosynthesis; L-leucine from 3-methyl-2-oxobutanoate: step 4/4. The protein operates within amino-acid biosynthesis; L-valine biosynthesis; L-valine from pyruvate: step 4/4. Its activity is regulated as follows. Inhibited by ammonium sulfate at millimolar concentrations and by O-benzylhydroxylamine (Obe). Functionally, catalyzes the reversible transfers of an amino group from glutamate to the alpha-ketoacid of the respective amino acid in the final step in the biosynthesis of branchedchain amino acids. The amino acids can be ranked in the following order with respect to their efficiency as amino donor: Leu &gt; Ile &gt; Val. The protein is Branched-chain-amino-acid aminotransferase (ilvE) of Mycolicibacterium smegmatis (strain ATCC 700084 / mc(2)155) (Mycobacterium smegmatis).